Reading from the N-terminus, the 648-residue chain is Biosynthetic arginine decarboxylase (648 aa).

Lysine 109 carries the post-translational modification N6-(pyridoxal phosphate)lysine. 291-301 contributes to the substrate binding site; the sequence is IDVGGGLGIDF.

The protein belongs to the Orn/Lys/Arg decarboxylase class-II family. SpeA subfamily. Requires Mg(2+) as cofactor. Pyridoxal 5'-phosphate serves as cofactor.

It carries out the reaction L-arginine + H(+) = agmatine + CO2. The protein operates within amine and polyamine biosynthesis; agmatine biosynthesis; agmatine from L-arginine: step 1/1. Its function is as follows. Catalyzes the biosynthesis of agmatine from arginine. In Prochlorococcus marinus (strain MIT 9515), this protein is Biosynthetic arginine decarboxylase.